Here is a 368-residue protein sequence, read N- to C-terminus: Phosphoserine aminotransferase (368 aa).

Arg-44 serves as a coordination point for L-glutamate. Pyridoxal 5'-phosphate-binding positions include 78–79, Trp-104, Thr-157, Asp-179, and Gln-202; that span reads AT. Lys-203 is modified (N6-(pyridoxal phosphate)lysine). 244–245 is a pyridoxal 5'-phosphate binding site; sequence NT.

This sequence belongs to the class-V pyridoxal-phosphate-dependent aminotransferase family. SerC subfamily. Homodimer. Pyridoxal 5'-phosphate is required as a cofactor.

Its subcellular location is the cytoplasm. The catalysed reaction is O-phospho-L-serine + 2-oxoglutarate = 3-phosphooxypyruvate + L-glutamate. It carries out the reaction 4-(phosphooxy)-L-threonine + 2-oxoglutarate = (R)-3-hydroxy-2-oxo-4-phosphooxybutanoate + L-glutamate. It participates in amino-acid biosynthesis; L-serine biosynthesis; L-serine from 3-phospho-D-glycerate: step 2/3. The protein operates within cofactor biosynthesis; pyridoxine 5'-phosphate biosynthesis; pyridoxine 5'-phosphate from D-erythrose 4-phosphate: step 3/5. Functionally, catalyzes the reversible conversion of 3-phosphohydroxypyruvate to phosphoserine and of 3-hydroxy-2-oxo-4-phosphonooxybutanoate to phosphohydroxythreonine. This is Phosphoserine aminotransferase from Neisseria gonorrhoeae (strain ATCC 700825 / FA 1090).